The sequence spans 648 residues: MSTETWNLFVAWAQLLLLFRISPQYVNAKPCPSVCRCDGGFIYCNDRDLTSIPSGIPDDATTLYLQNNQINNAGIPSDLRGLDKVERIYLYRNSLDEFPINLPKNVKELHLQENNIRTITYDALSQIPSIEELHLDDNSVSAVSIEDGAFRDNIFLRLLFLSRNHLSTIPWGLPRTIEELRLDDNRISTIAEISLQDLTNLKRLVLDGNLLNNNGLGERVFMNLINLTELSLVRNSLTSPPANLPGTNLRKLYLQENHMNYVPPNAFADLTQLYRLDMSNNNITALPQGIFDDLDNLTQLFLRNNPWYCGCKMKWVRDWLQSLPSKVNVRGLMCQAPERVRGMTIKDLNKELFDCKDRIGSNTIHVTTTVLNSLLPAQGQWPVPVTKQPEIRPPDINKIFRTTPIPVKKIITIQVKSITTETIYISWKVALPMTALRLSWQLGHSPVFGSITETIVTGDRTEYLLTALEPESPYRICMVPMETGNIYLSDETPVCIETETAPLKMYNPTTTLNREQEKEPYKNSSLPLAAIIGGAVALVAITLLALVCWYVHRNGSLFSRNCAYSKGRRRKDDYAEAGTKKDNSILEIRETSFPMIPINSDPISKEEFIIHTIFPPNGVSLYKNSHSESSSNRSYRDSGIPDSDHSHS.

The signal sequence occupies residues 1–28 (MSTETWNLFVAWAQLLLLFRISPQYVNA). Residues 29-527 (KPCPSVCRCD…KEPYKNSSLP (499 aa)) lie on the Extracellular side of the membrane. An LRRNT domain is found at 30–62 (PCPSVCRCDGGFIYCNDRDLTSIPSGIPDDATT). Intrachain disulfides connect C31-C37 and C35-C44. LRR repeat units follow at residues 58 to 82 (DDAT…LRGL), 83 to 105 (DKVE…LPKN), 107 to 126 (KELH…ALSQ), 127 to 152 (IPSI…AFRD), 154 to 179 (IFLR…TIEE), 181 to 197 (RLDD…SLQD), 198 to 223 (LTNL…VFMN), 225 to 246 (INLT…NLPG), 247 to 269 (TNLR…AFAD), and 270 to 293 (LTQL…IFDD). N226 is a glycosylation site (N-linked (GlcNAc...) asparagine). Positions 305–356 (NPWYCGCKMKWVRDWLQSLPSKVNVRGLMCQAPERVRGMTIKDLNKELFDCK) constitute an LRRCT domain. An intrachain disulfide couples C309 to C334. The 95-residue stretch at 409–503 (KIITIQVKSI…VCIETETAPL (95 aa)) folds into the Fibronectin type-III domain. The chain crosses the membrane as a helical span at residues 528–548 (LAAIIGGAVALVAITLLALVC). Residues 549 to 648 (WYVHRNGSLF…GIPDSDHSHS (100 aa)) are Cytoplasmic-facing. Residues 624 to 633 (NSHSESSSNR) are compositionally biased toward low complexity. Residues 624 to 648 (NSHSESSSNRSYRDSGIPDSDHSHS) are disordered.

As to quaternary structure, interacts with fgfr1 and fgfr4. Interacts with rnd1, cdh1 and pcdh8. Interacts (via extracellular domain) with unc5b and unc5d (via extracellular domain). Post-translationally, N-glycosylated. In terms of processing, proteolytic cleavage in the juxtamembrane region gives rise to a soluble ectodomain. Cleavage is probably effected by a metalloprotease.

Its subcellular location is the cell membrane. It is found in the endoplasmic reticulum membrane. The protein localises to the cell junction. The protein resides in the focal adhesion. It localises to the secreted. Its subcellular location is the cell projection. It is found in the axon. The protein localises to the growth cone membrane. Functions in cell-cell adhesion, cell migration and axon guidance, exerting an attractive or repulsive role depending on its interaction partners. Modulates cadherin-dependent cell-cell adhesion and cell sorting. Plays a role in the spatial organization of brain neurons. Plays a role in vascular development. Plays a role in cell-cell adhesion via its interaction with latrophilins that are expressed at the surface of adjacent cells. Mediates axon attraction towards cells expressing ntn1. mediates axon growth cone collapse and plays a repulsive role in neuron guidance via its interaction with unc-5 family members. Plays a role in the regulation of the density of glutamaergic synapses. Plays a role in signaling cascades downstream of fgfr1, and possibly also other fgfr family members. Plays a role in embryonic morphogenesis, but not in embryonic patterning. This is Leucine-rich repeat transmembrane protein FLRT3 from Xenopus tropicalis (Western clawed frog).